Consider the following 239-residue polypeptide: Small ribosomal subunit protein uS2 (239 aa).

It belongs to the universal ribosomal protein uS2 family.

This Francisella tularensis subsp. holarctica (strain FTNF002-00 / FTA) protein is Small ribosomal subunit protein uS2.